We begin with the raw amino-acid sequence, 305 residues long: Methionyl-tRNA formyltransferase (305 aa).

Residue 108–111 (SLLP) coordinates (6S)-5,6,7,8-tetrahydrofolate.

It belongs to the Fmt family.

The enzyme catalyses L-methionyl-tRNA(fMet) + (6R)-10-formyltetrahydrofolate = N-formyl-L-methionyl-tRNA(fMet) + (6S)-5,6,7,8-tetrahydrofolate + H(+). In terms of biological role, attaches a formyl group to the free amino group of methionyl-tRNA(fMet). The formyl group appears to play a dual role in the initiator identity of N-formylmethionyl-tRNA by promoting its recognition by IF2 and preventing the misappropriation of this tRNA by the elongation apparatus. In Clavibacter michiganensis subsp. michiganensis (strain NCPPB 382), this protein is Methionyl-tRNA formyltransferase.